Reading from the N-terminus, the 103-residue chain is Large ribosomal subunit protein bL21 (103 aa).

This sequence belongs to the bacterial ribosomal protein bL21 family. Part of the 50S ribosomal subunit. Contacts protein L20.

Its function is as follows. This protein binds to 23S rRNA in the presence of protein L20. The polypeptide is Large ribosomal subunit protein bL21 (Shewanella amazonensis (strain ATCC BAA-1098 / SB2B)).